The primary structure comprises 465 residues: Fumarate hydratase class II (465 aa).

Substrate-binding positions include 98 to 100 (SGT), Arg126, 129 to 132 (HPND), 139 to 141 (SSN), and Thr187. Catalysis depends on His188, which acts as the Proton donor/acceptor. Ser318 is an active-site residue. Substrate is bound by residues Ser319 and 324–326 (KVN).

Belongs to the class-II fumarase/aspartase family. Fumarase subfamily. As to quaternary structure, homotetramer.

It is found in the cytoplasm. It carries out the reaction (S)-malate = fumarate + H2O. Its pathway is carbohydrate metabolism; tricarboxylic acid cycle; (S)-malate from fumarate: step 1/1. Involved in the TCA cycle. Catalyzes the stereospecific interconversion of fumarate to L-malate. The sequence is that of Fumarate hydratase class II from Yersinia pestis.